The following is a 170-amino-acid chain: NADH-quinone oxidoreductase subunit B (170 aa).

[4Fe-4S] cluster is bound by residues cysteine 37, cysteine 38, cysteine 102, and cysteine 131.

This sequence belongs to the complex I 20 kDa subunit family. NDH-1 is composed of 14 different subunits. Subunits NuoB, C, D, E, F, and G constitute the peripheral sector of the complex. The cofactor is [4Fe-4S] cluster.

It is found in the cell inner membrane. It catalyses the reaction a quinone + NADH + 5 H(+)(in) = a quinol + NAD(+) + 4 H(+)(out). Its function is as follows. NDH-1 shuttles electrons from NADH, via FMN and iron-sulfur (Fe-S) centers, to quinones in the respiratory chain. The immediate electron acceptor for the enzyme in this species is believed to be ubiquinone. Couples the redox reaction to proton translocation (for every two electrons transferred, four hydrogen ions are translocated across the cytoplasmic membrane), and thus conserves the redox energy in a proton gradient. The protein is NADH-quinone oxidoreductase subunit B of Geobacter metallireducens (strain ATCC 53774 / DSM 7210 / GS-15).